The primary structure comprises 303 residues: Phosphatidylglycerol--prolipoprotein diacylglyceryl transferase (303 aa).

3 consecutive transmembrane segments (helical) span residues 18–38, 58–78, and 107–127; these read VGFF…LIGL, LLPI…VIFE, and WQGG…ILIF. A 1,2-diacyl-sn-glycero-3-phospho-(1'-sn-glycerol) is bound at residue arginine 154. Transmembrane regions (helical) follow at residues 193-213 and 266-286; these read PTFL…ISLI and IAQL…FWIY.

Belongs to the Lgt family.

The protein localises to the cell inner membrane. The catalysed reaction is L-cysteinyl-[prolipoprotein] + a 1,2-diacyl-sn-glycero-3-phospho-(1'-sn-glycerol) = an S-1,2-diacyl-sn-glyceryl-L-cysteinyl-[prolipoprotein] + sn-glycerol 1-phosphate + H(+). It functions in the pathway protein modification; lipoprotein biosynthesis (diacylglyceryl transfer). Its function is as follows. Catalyzes the transfer of the diacylglyceryl group from phosphatidylglycerol to the sulfhydryl group of the N-terminal cysteine of a prolipoprotein, the first step in the formation of mature lipoproteins. The polypeptide is Phosphatidylglycerol--prolipoprotein diacylglyceryl transferase (Prochlorococcus marinus (strain MIT 9211)).